Consider the following 201-residue polypeptide: 3-isopropylmalate dehydratase small subunit (201 aa).

It belongs to the LeuD family. LeuD type 1 subfamily. As to quaternary structure, heterodimer of LeuC and LeuD.

It carries out the reaction (2R,3S)-3-isopropylmalate = (2S)-2-isopropylmalate. The protein operates within amino-acid biosynthesis; L-leucine biosynthesis; L-leucine from 3-methyl-2-oxobutanoate: step 2/4. Functionally, catalyzes the isomerization between 2-isopropylmalate and 3-isopropylmalate, via the formation of 2-isopropylmaleate. This Chloroflexus aurantiacus (strain ATCC 29366 / DSM 635 / J-10-fl) protein is 3-isopropylmalate dehydratase small subunit.